The primary structure comprises 191 residues: Calcium and integrin-binding protein 1 (191 aa).

Residue Gly-2 is the site of N-myristoyl glycine attachment. EF-hand domains are found at residues 103–138 and 148–183; these read TPDI…LTGE and EMKQ…SPDF. Residues Asp-116, Asp-118, Asp-120, Thr-122, Asp-127, Asp-161, Asp-163, Asp-165, Thr-167, and Glu-172 each contribute to the Ca(2+) site.

Monomer. Interacts with the heterodimeric integrin alpha-IIb/beta3 (ITGA2B-ITGB3). Interacts with ITGA2B (via cytoplasmic domain); the interaction is direct and calcium-dependent. Interacts with the protein kinases PLK2/SNK and PRKDC (via the region immediately upstream of the kinase domain). Interacts with PLK3; the interaction inhibits PLK3 kinase activity. Interacts with PSEN2. Interacts (via C-terminus) with F8. Interacts with NBR1 (via C-terminus). Interacts with FEZ1 (via C-terminus). Interacts with UBR5 (via C-terminus); the interaction is sensitive to DNA damage, and may target CIB1 for ubiquitin-mediated degradation. Interacts with IFI6; the interaction is direct. Interacts with BCL2. Interacts with ITPR3; the interaction occurs in a calcium dependent manner. Interacts with PTK2/FAK1. Interacts with MAP3K5; the interaction inhibits MAP3K5 activation by phosphorylation, and its subsequent interaction with TRAF2. Interacts (via C-terminal region) with STMN2 (via the N-terminal region); the interaction is direct, occurs in a calcium-dependent manner and attenuates the STMN2-induced neurite outgrowth inhibition. Interacts with SPHK1, the interaction occurs in a calcium-dependent manner. Interacts with ITGA2B (via C-terminal cytoplasmic tail); the interaction occurs upon platelet aggregation and is stabilized/increased in a calcium and magnesium-dependent manner. Interacts with PAK1 (via N-terminal region); the interaction is direct and occurs in a calcium-dependent manner. Interacts with RAC3 (via C-terminal region); the interaction induces their association with the cytoskeleton upon alpha-IIb/beta3 integrin-mediated adhesion. Interacts with ITGA5 and ITGAV. Interacts with MYO1C. Interacts with ITGA2B (via C-terminal cytoplasmic tail region). Interacts (via C-terminal region) with PPP3R1; the interaction increases upon cardiomyocytes hypertrophy. Interacts with CACNA1C; the interaction increases upon cardiomyocytes hypertrophy. Interacts with TAS1R2 (via C-terminus); this interaction is independent of the myristoylation state of CIB1. Interacts and forms a complex with TMC6 and TMC8; the interaction stabilizes each component of the complex. In terms of tissue distribution, expressed in cardiomyocytes and neurons (at protein level). Expressed during early neural development.

Its subcellular location is the membrane. It is found in the cell membrane. The protein resides in the sarcolemma. The protein localises to the apical cell membrane. It localises to the cell projection. Its subcellular location is the ruffle membrane. It is found in the filopodium tip. The protein resides in the growth cone. The protein localises to the lamellipodium. It localises to the cytoplasm. Its subcellular location is the cytoskeleton. It is found in the microtubule organizing center. The protein resides in the centrosome. The protein localises to the perinuclear region. It localises to the nucleus. Its subcellular location is the neuron projection. It is found in the perikaryon. In terms of biological role, calcium-binding protein that plays a role in the regulation of numerous cellular processes, such as cell differentiation, cell division, cell proliferation, cell migration, thrombosis, angiogenesis, cardiac hypertrophy and apoptosis. Involved in bone marrow megakaryocyte differentiation by negatively regulating thrombopoietin-mediated signaling pathway. Participates in the endomitotic cell cycle of megakaryocyte, a form of mitosis in which both karyokinesis and cytokinesis are interrupted. Plays a role in integrin signaling by negatively regulating alpha-IIb/beta3 activation in thrombin-stimulated megakaryocytes preventing platelet aggregation. Up-regulates PTK2/FAK1 activity, and is also needed for the recruitment of PTK2/FAK1 to focal adhesions; it thus appears to play an important role in focal adhesion formation. Positively regulates cell migration on fibronectin in a CDC42-dependent manner, the effect being negatively regulated by PAK1. Functions as a negative regulator of stress activated MAP kinase (MAPK) signaling pathways. Down-regulates inositol 1,4,5-trisphosphate receptor-dependent calcium signaling. Involved in sphingosine kinase SPHK1 translocation to the plasma membrane in a N-myristoylation-dependent manner preventing TNF-alpha-induced apoptosis. Regulates serine/threonine-protein kinase PLK3 activity for proper completion of cell division progression. Plays a role in microtubule (MT) dynamics during neuronal development; disrupts the MT depolymerization activity of STMN2 attenuating NGF-induced neurite outgrowth and the MT reorganization at the edge of lamellipodia. Promotes cardiomyocyte hypertrophy via activation of the calcineurin/NFAT signaling pathway. Stimulates calcineurin PPP3R1 activity by mediating its anchoring to the sarcolemma. In ischemia-induced (pathological or adaptive) angiogenesis, stimulates endothelial cell proliferation, migration and microvessel formation by activating the PAK1 and ERK1/ERK2 signaling pathway. Also promotes cancer cell survival and proliferation. May regulate cell cycle and differentiation of spermatogenic germ cells, and/or differentiation of supporting Sertoli cells. Forms a complex with TMC6/EVER1 and TMC8/EVER2 in lymphocytes and keratynocytes where CIB1 stabilizes TMC6 and TMC8 levels and reciprocally. This chain is Calcium and integrin-binding protein 1 (Cib1), found in Rattus norvegicus (Rat).